The sequence spans 114 residues: UPF0342 protein LCABL_19440 (114 aa).

It belongs to the UPF0342 family.

The chain is UPF0342 protein LCABL_19440 from Lacticaseibacillus casei (strain BL23) (Lactobacillus casei).